A 348-amino-acid chain; its full sequence is Protein RecA (348 aa).

65–72 (GPESSGKT) is a binding site for ATP.

It belongs to the RecA family.

The protein localises to the cytoplasm. Its function is as follows. Can catalyze the hydrolysis of ATP in the presence of single-stranded DNA, the ATP-dependent uptake of single-stranded DNA by duplex DNA, and the ATP-dependent hybridization of homologous single-stranded DNAs. It interacts with LexA causing its activation and leading to its autocatalytic cleavage. The protein is Protein RecA of Alteromonas mediterranea (strain DSM 17117 / CIP 110805 / LMG 28347 / Deep ecotype).